The chain runs to 661 residues: Sorting nexin-4 (661 aa).

Composition is skewed to polar residues over residues 1–10 and 26–36; these read MSDQFTSIQW and HSQVQINSSIN. Disordered stretches follow at residues 1-49 and 56-75; these read MSDQ…QEQD and TVVR…IPPR. The span at 38-49 shows a compositional bias: acidic residues; that stretch reads IEEDQGQEQEQD. Polar residues predominate over residues 56 to 70; the sequence is TVVRGGNDSDSNPNE. Positions 77–198 constitute a PX domain; that stretch reads VYIRSKVSQP…HIFLEDSVNW (122 aa). A 1,2-diacyl-sn-glycero-3-phospho-(1D-myo-inositol-3-phosphate) contacts are provided by arginine 120, serine 122, lysine 146, and arginine 165. The segment covering 554–572 has biased composition (basic and acidic residues); it reads LRSIKSQERKNEQVHKQDQ. The tract at residues 554 to 661 is disordered; the sequence is LRSIKSQERK…LVDVEGLEQW (108 aa). Polar residues predominate over residues 624–640; the sequence is ASQTESHTQSEPQNDNQ. A compositionally biased stretch (acidic residues) spans 645 to 661; the sequence is DDGSDEGLVDVEGLEQW.

It belongs to the sorting nexin family.

It is found in the cytoplasm. Its subcellular location is the membrane. The protein resides in the vacuole membrane. Its function is as follows. Sorting nexin involved in the separation or division of vacuoles throughout the entire life cycle of the cells. Required for glucose-induced micropexophagy and ethanol-induced macropexophagy. Involved in the fusion between the pexophagosome and the vacuole. Also involved in the separation or division of vacuoles throughout the entire life cycle of the cells. In Komagataella pastoris (Yeast), this protein is Sorting nexin-4 (SNX4).